We begin with the raw amino-acid sequence, 185 residues long: Peptidyl-tRNA hydrolase (185 aa).

Tyrosine 14 serves as a coordination point for tRNA. The Proton acceptor role is filled by histidine 19. Residues tyrosine 65, asparagine 67, and asparagine 113 each contribute to the tRNA site.

It belongs to the PTH family. As to quaternary structure, monomer.

The protein localises to the cytoplasm. It carries out the reaction an N-acyl-L-alpha-aminoacyl-tRNA + H2O = an N-acyl-L-amino acid + a tRNA + H(+). Its function is as follows. Hydrolyzes ribosome-free peptidyl-tRNAs (with 1 or more amino acids incorporated), which drop off the ribosome during protein synthesis, or as a result of ribosome stalling. Catalyzes the release of premature peptidyl moieties from peptidyl-tRNA molecules trapped in stalled 50S ribosomal subunits, and thus maintains levels of free tRNAs and 50S ribosomes. The sequence is that of Peptidyl-tRNA hydrolase from Rickettsia felis (strain ATCC VR-1525 / URRWXCal2) (Rickettsia azadi).